A 322-amino-acid chain; its full sequence is Transaldolase (322 aa).

The Schiff-base intermediate with substrate role is filled by lysine 136.

The protein belongs to the transaldolase family. Type 1 subfamily. As to quaternary structure, homodimer.

It localises to the cytoplasm. The enzyme catalyses D-sedoheptulose 7-phosphate + D-glyceraldehyde 3-phosphate = D-erythrose 4-phosphate + beta-D-fructose 6-phosphate. The protein operates within carbohydrate degradation; pentose phosphate pathway; D-glyceraldehyde 3-phosphate and beta-D-fructose 6-phosphate from D-ribose 5-phosphate and D-xylulose 5-phosphate (non-oxidative stage): step 2/3. Its function is as follows. Transaldolase is important for the balance of metabolites in the pentose-phosphate pathway. This is Transaldolase from Xanthomonas euvesicatoria pv. vesicatoria (strain 85-10) (Xanthomonas campestris pv. vesicatoria).